The sequence spans 347 residues: Isopentenyl-diphosphate delta-isomerase (347 aa).

Position 9 to 10 (9 to 10 (RK)) interacts with substrate. FMN is bound by residues Ser67, 68–70 (SMT), Ser98, and Asn127. 98–100 (SQR) lines the substrate pocket. Residue Gln162 participates in substrate binding. Residue Glu163 coordinates Mg(2+). FMN contacts are provided by residues Lys194, Thr224, 274-276 (GIK), and 295-296 (AA).

This sequence belongs to the IPP isomerase type 2 family. In terms of assembly, homooctamer. Dimer of tetramers. FMN serves as cofactor. NADPH is required as a cofactor. Requires Mg(2+) as cofactor.

It is found in the cytoplasm. It carries out the reaction isopentenyl diphosphate = dimethylallyl diphosphate. Its function is as follows. Involved in the biosynthesis of isoprenoids. Catalyzes the 1,3-allylic rearrangement of the homoallylic substrate isopentenyl (IPP) to its allylic isomer, dimethylallyl diphosphate (DMAPP). The polypeptide is Isopentenyl-diphosphate delta-isomerase (Pseudescherichia vulneris (Escherichia vulneris)).